The sequence spans 241 residues: Spheroidene monooxygenase (241 aa).

Belongs to the CrtA family. Heme is required as a cofactor.

It catalyses the reaction spheroidene + 4 reduced [2Fe-2S]-[ferredoxin] + 2 O2 + 4 H(+) = spheroiden-2-one + 4 oxidized [2Fe-2S]-[ferredoxin] + 3 H2O. The catalysed reaction is spirilloxanthin + 4 reduced [2Fe-2S]-[ferredoxin] + 2 O2 + 4 H(+) = 2-oxospirilloxanthin + 4 oxidized [2Fe-2S]-[ferredoxin] + 3 H2O. It carries out the reaction 2-oxospirilloxanthin + 4 reduced [2Fe-2S]-[ferredoxin] + 2 O2 + 4 H(+) = 2,2'-dioxospirilloxanthin + 4 oxidized [2Fe-2S]-[ferredoxin] + 3 H2O. The enzyme catalyses spheroidene + 2 reduced [2Fe-2S]-[ferredoxin] + O2 + 2 H(+) = 2-hydroxyspheroidene + 2 oxidized [2Fe-2S]-[ferredoxin] + H2O. It catalyses the reaction 2-hydroxyspheroidene + 2 reduced [2Fe-2S]-[ferredoxin] + O2 + 2 H(+) = 2,2-dihydroxyspheroidene + 2 oxidized [2Fe-2S]-[ferredoxin] + H2O. The catalysed reaction is 2,2-dihydroxyspheroidene = spheroiden-2-one + H2O. It carries out the reaction spirilloxanthin + 2 reduced [2Fe-2S]-[ferredoxin] + O2 + 2 H(+) = 2-hydroxyspirilloxanthin + 2 oxidized [2Fe-2S]-[ferredoxin] + H2O. The enzyme catalyses 2-hydroxyspirilloxanthin + 2 reduced [2Fe-2S]-[ferredoxin] + O2 + 2 H(+) = 2,2-dihydroxyspirilloxanthin + 2 oxidized [2Fe-2S]-[ferredoxin] + H2O. It catalyses the reaction 2,2-dihydroxyspirilloxanthin = 2-oxospirilloxanthin + H2O. The catalysed reaction is 2-oxospirilloxanthin + 2 reduced [2Fe-2S]-[ferredoxin] + O2 + 2 H(+) = 2'-hydroxy-2-oxospirilloxanthin + 2 oxidized [2Fe-2S]-[ferredoxin] + H2O. It carries out the reaction 2'-hydroxy-2-oxospirilloxanthin + 2 reduced [2Fe-2S]-[ferredoxin] + O2 + 2 H(+) = 2',2'-dihydroxy-2-oxospirilloxanthin + 2 oxidized [2Fe-2S]-[ferredoxin] + H2O. The enzyme catalyses 2',2'-dihydroxy-2-oxospirilloxanthin = 2,2'-dioxospirilloxanthin + H2O. It functions in the pathway carotenoid biosynthesis; spheroidene biosynthesis. Its function is as follows. Involved in the biosynthesis of the carotenoid spheroidene. Catalyzes the introduction of one keto group at the C-2 position of spheroidene. In vitro, can also catalyze the introduction of two keto groups at the C-2 and C-2' positions of spirilloxanthin, but spirilloxanthin biosynthesis pathway is not present in R.capsulatus. The chain is Spheroidene monooxygenase from Rhodobacter capsulatus (strain ATCC BAA-309 / NBRC 16581 / SB1003).